A 685-amino-acid chain; its full sequence is A-type ATP synthase subunit I (685 aa).

7 helical membrane passes run 172–192 (VGGLAAVEASGGSVVVAVAVP), 348–368 (EIVPTVFLAITLPLTFALMFP), 394–414 (VIAVMGGASVVSGLLAGEVFG), 464–484 (LFMGAFMLSFGTFLGVVNGVI), 538–558 (LVLAGSVLGLAWMLLAGPIIY), 604–624 (MFVIYYLTVMIMQGGILADVV), and 626–646 (ALLYVGGNLAVAAMEGLLAFA).

It belongs to the V-ATPase 116 kDa subunit family. Has multiple subunits with at least A(3), B(3), C, D, E, F, H, I and proteolipid K(x).

Its subcellular location is the cell membrane. Functionally, component of the A-type ATP synthase that produces ATP from ADP in the presence of a proton gradient across the membrane. This is A-type ATP synthase subunit I from Aeropyrum pernix (strain ATCC 700893 / DSM 11879 / JCM 9820 / NBRC 100138 / K1).